The following is a 63-amino-acid chain: DNA-directed RNA polymerase subunit omega (63 aa).

This sequence belongs to the RNA polymerase subunit omega family. As to quaternary structure, the RNAP catalytic core consists of 2 alpha, 1 beta, 1 beta' and 1 omega subunit. When a sigma factor is associated with the core the holoenzyme is formed, which can initiate transcription.

The catalysed reaction is RNA(n) + a ribonucleoside 5'-triphosphate = RNA(n+1) + diphosphate. Its function is as follows. Promotes RNA polymerase assembly. Latches the N- and C-terminal regions of the beta' subunit thereby facilitating its interaction with the beta and alpha subunits. The sequence is that of DNA-directed RNA polymerase subunit omega from Blochmanniella pennsylvanica (strain BPEN).